Reading from the N-terminus, the 189-residue chain is UPF0301 protein CTLon_0458 (189 aa).

It belongs to the UPF0301 (AlgH) family.

This chain is UPF0301 protein CTLon_0458, found in Chlamydia trachomatis serovar L2b (strain UCH-1/proctitis).